An 88-amino-acid polypeptide reads, in one-letter code: Putative septation protein SpoVG (88 aa).

The protein belongs to the SpoVG family.

Could be involved in septation. The protein is Putative septation protein SpoVG of Desulforudis audaxviator (strain MP104C).